We begin with the raw amino-acid sequence, 617 residues long: Putative metal ion transporter C17A12.14 (617 aa).

The tract at residues 1 to 141 (MPSNTSRSVP…GKNTRDQPSP (141 aa)) is disordered. S105 is subject to Phosphoserine. A compositionally biased stretch (basic and acidic residues) spans 117–136 (SHPEDIQRKEFETENGKNTR). Phosphoserine is present on residues S152, S162, S226, and S241. 2 helical membrane passes run 560 to 580 (TILG…GMNV) and 590 to 610 (LGWF…SFIL).

This sequence belongs to the CorA metal ion transporter (MIT) (TC 1.A.35) family. As to quaternary structure, interacts with sad1.

The protein resides in the membrane. The polypeptide is Putative metal ion transporter C17A12.14 (Schizosaccharomyces pombe (strain 972 / ATCC 24843) (Fission yeast)).